Reading from the N-terminus, the 550-residue chain is Parathyroid hormone 2 receptor (550 aa).

An N-terminal signal peptide occupies residues Met1–Ala24. Topologically, residues Asp27–Tyr145 are extracellular. N-linked (GlcNAc...) asparagine glycans are attached at residues Asn51, Asn106, Asn116, and Asn121. The helical transmembrane segment at Val146–Phe169 threads the bilayer. Topologically, residues Arg170 to Arg176 are cytoplasmic. A helical membrane pass occupies residues Asn177–Val196. Residues Lys197–Lys237 are Extracellular-facing. The chain crosses the membrane as a helical span at residues Ile238 to Tyr260. Topologically, residues Leu261–Tyr275 are cytoplasmic. The helical transmembrane segment at Leu276–Ala297 threads the bilayer. Over Arg298–Trp316 the chain is Extracellular. Residues Ile317–Val337 form a helical membrane-spanning segment. Residues Arg338–Ser364 are Cytoplasmic-facing. A helical membrane pass occupies residues Thr365–Pro383. Topologically, residues His384 to Arg394 are extracellular. A helical membrane pass occupies residues Met395–Asn417. Topologically, residues Gly418–Leu550 are cytoplasmic. Positions Glu511–Arg531 are enriched in basic and acidic residues. The tract at residues Glu511–Leu550 is disordered.

This sequence belongs to the G-protein coupled receptor 2 family. Binds to TIPF39/TIP39. As to expression, expressed abundantly in brain and pancreas. Also expressed in the testis.

It is found in the cell membrane. In terms of biological role, this is a specific receptor for parathyroid hormone. The activity of this receptor is mediated by G proteins which activate adenylyl cyclase. PTH2R may be responsible for PTH effects in a number of physiological systems. It may play a significant role in pancreatic function. PTH2R presence in neurons indicates that it may function as a neurotransmitter receptor. This Homo sapiens (Human) protein is Parathyroid hormone 2 receptor (PTH2R).